The sequence spans 429 residues: Histidinol dehydrogenase (429 aa).

The NAD(+) site is built by tyrosine 127, glutamine 188, and asparagine 211. Positions 234, 256, and 259 each coordinate substrate. The Zn(2+) site is built by glutamine 256 and histidine 259. Active-site proton acceptor residues include glutamate 324 and histidine 325. Histidine 325, aspartate 358, glutamate 412, and histidine 417 together coordinate substrate. Position 358 (aspartate 358) interacts with Zn(2+). Histidine 417 serves as a coordination point for Zn(2+).

The protein belongs to the histidinol dehydrogenase family. It depends on Zn(2+) as a cofactor.

The enzyme catalyses L-histidinol + 2 NAD(+) + H2O = L-histidine + 2 NADH + 3 H(+). The protein operates within amino-acid biosynthesis; L-histidine biosynthesis; L-histidine from 5-phospho-alpha-D-ribose 1-diphosphate: step 9/9. Functionally, catalyzes the sequential NAD-dependent oxidations of L-histidinol to L-histidinaldehyde and then to L-histidine. In Bacillus cereus (strain ATCC 14579 / DSM 31 / CCUG 7414 / JCM 2152 / NBRC 15305 / NCIMB 9373 / NCTC 2599 / NRRL B-3711), this protein is Histidinol dehydrogenase.